The chain runs to 490 residues: Betaine aldehyde dehydrogenase (490 aa).

K(+) is bound by residues T26 and D93. An NAD(+)-binding site is contributed by 150-152 (GAW). K162 acts as the Charge relay system in catalysis. 176-179 (KPSE) is a binding site for NAD(+). Position 180 (V180) interacts with K(+). 230 to 233 (GVAT) is an NAD(+) binding site. L246 provides a ligand contact to K(+). The active-site Proton acceptor is E252. NAD(+) is bound by residues G254, C286, and E387. The active-site Nucleophile is the C286. Cysteine sulfenic acid (-SOH) is present on C286. K(+) is bound by residues K457 and G460. E464 (charge relay system) is an active-site residue.

Belongs to the aldehyde dehydrogenase family. As to quaternary structure, dimer of dimers. K(+) serves as cofactor.

It carries out the reaction betaine aldehyde + NAD(+) + H2O = glycine betaine + NADH + 2 H(+). Its pathway is amine and polyamine biosynthesis; betaine biosynthesis via choline pathway; betaine from betaine aldehyde: step 1/1. Involved in the biosynthesis of the osmoprotectant glycine betaine. Catalyzes the irreversible oxidation of betaine aldehyde to the corresponding acid. This chain is Betaine aldehyde dehydrogenase, found in Stenotrophomonas maltophilia (strain K279a).